The sequence spans 91 residues: MARSIKKGPFVDLHLLKKVDAARSSNDKRPIKTWSRRSTILPDFVGMTIAVHNGRTHVPVYVTENMVGHKLGEFSLTRTFKGHAADKKAKR.

The protein belongs to the universal ribosomal protein uS19 family.

In terms of biological role, protein S19 forms a complex with S13 that binds strongly to the 16S ribosomal RNA. The protein is Small ribosomal subunit protein uS19 of Laribacter hongkongensis (strain HLHK9).